The primary structure comprises 108 residues: U-scoloptoxin(10)-Sm1a (108 aa).

The signal sequence occupies residues 1–24 (MNKQWLHFFSVLLLCYVIEETCSL).

Belongs to the scoloptoxin-10 family. In terms of processing, contains 3 disulfide bonds. Expressed by the venom gland.

The protein localises to the secreted. This chain is U-scoloptoxin(10)-Sm1a, found in Scolopendra morsitans (Tanzanian blue ringleg centipede).